A 158-amino-acid polypeptide reads, in one-letter code: Small ribosomal subunit protein uS10m (158 aa).

It belongs to the universal ribosomal protein uS10 family.

The protein resides in the mitochondrion. The protein is Small ribosomal subunit protein uS10m (mrps-10) of Caenorhabditis briggsae.